Reading from the N-terminus, the 175-residue chain is MSLREIIILPDRQLRLVSKPVEKVTPEIRQLVDDMFQTMYDAPGIGLAAIQVAQPLRVITMDLAKPDSGGETKREPRVFINPEIIAKSDELSVYEEGCLSIPEYYEEVERPARVRVRFTDLDGVVREEDAEGLYATCIQHEIDHLNGVLFIDYLSKLKRDRVMKKFTKAAKRAGE.

Residues Cys98 and His140 each contribute to the Fe cation site. Glu141 is an active-site residue. His144 is a Fe cation binding site.

The protein belongs to the polypeptide deformylase family. Requires Fe(2+) as cofactor.

It catalyses the reaction N-terminal N-formyl-L-methionyl-[peptide] + H2O = N-terminal L-methionyl-[peptide] + formate. Removes the formyl group from the N-terminal Met of newly synthesized proteins. Requires at least a dipeptide for an efficient rate of reaction. N-terminal L-methionine is a prerequisite for activity but the enzyme has broad specificity at other positions. This is Peptide deformylase from Bradyrhizobium sp. (strain ORS 278).